The chain runs to 343 residues: Glyceraldehyde-3-phosphate dehydrogenase (343 aa).

NAD(+) is bound by residues 13-14 (TI) and Gly-111. 140 to 142 (SCN) serves as a coordination point for D-glyceraldehyde 3-phosphate. The Nucleophile role is filled by Cys-141. Arg-169 serves as a coordination point for NAD(+). 195 to 196 (HA) lines the D-glyceraldehyde 3-phosphate pocket. Gln-303 contributes to the NAD(+) binding site.

The protein belongs to the glyceraldehyde-3-phosphate dehydrogenase family. In terms of assembly, homotetramer.

It is found in the cytoplasm. The enzyme catalyses D-glyceraldehyde 3-phosphate + phosphate + NADP(+) = (2R)-3-phospho-glyceroyl phosphate + NADPH + H(+). The catalysed reaction is D-glyceraldehyde 3-phosphate + phosphate + NAD(+) = (2R)-3-phospho-glyceroyl phosphate + NADH + H(+). It participates in carbohydrate degradation; glycolysis; pyruvate from D-glyceraldehyde 3-phosphate: step 1/5. This chain is Glyceraldehyde-3-phosphate dehydrogenase, found in Sulfurisphaera tokodaii (strain DSM 16993 / JCM 10545 / NBRC 100140 / 7) (Sulfolobus tokodaii).